The primary structure comprises 196 residues: Imidazoleglycerol-phosphate dehydratase (196 aa).

Belongs to the imidazoleglycerol-phosphate dehydratase family.

The protein localises to the cytoplasm. It catalyses the reaction D-erythro-1-(imidazol-4-yl)glycerol 3-phosphate = 3-(imidazol-4-yl)-2-oxopropyl phosphate + H2O. It functions in the pathway amino-acid biosynthesis; L-histidine biosynthesis; L-histidine from 5-phospho-alpha-D-ribose 1-diphosphate: step 6/9. The protein is Imidazoleglycerol-phosphate dehydratase of Clostridium novyi (strain NT).